The following is a 185-amino-acid chain: Ribosome-recycling factor (185 aa).

The protein belongs to the RRF family.

It localises to the cytoplasm. Responsible for the release of ribosomes from messenger RNA at the termination of protein biosynthesis. May increase the efficiency of translation by recycling ribosomes from one round of translation to another. This is Ribosome-recycling factor from Haemophilus influenzae (strain ATCC 51907 / DSM 11121 / KW20 / Rd).